The primary structure comprises 363 residues: UDP-N-acetylglucosamine--N-acetylmuramyl-(pentapeptide) pyrophosphoryl-undecaprenol N-acetylglucosamine transferase (363 aa).

Residues 14–16 (TGG), N122, R163, S190, and Q285 each bind UDP-N-acetyl-alpha-D-glucosamine.

This sequence belongs to the glycosyltransferase 28 family. MurG subfamily.

It localises to the cell inner membrane. The catalysed reaction is di-trans,octa-cis-undecaprenyl diphospho-N-acetyl-alpha-D-muramoyl-L-alanyl-D-glutamyl-meso-2,6-diaminopimeloyl-D-alanyl-D-alanine + UDP-N-acetyl-alpha-D-glucosamine = di-trans,octa-cis-undecaprenyl diphospho-[N-acetyl-alpha-D-glucosaminyl-(1-&gt;4)]-N-acetyl-alpha-D-muramoyl-L-alanyl-D-glutamyl-meso-2,6-diaminopimeloyl-D-alanyl-D-alanine + UDP + H(+). It participates in cell wall biogenesis; peptidoglycan biosynthesis. Cell wall formation. Catalyzes the transfer of a GlcNAc subunit on undecaprenyl-pyrophosphoryl-MurNAc-pentapeptide (lipid intermediate I) to form undecaprenyl-pyrophosphoryl-MurNAc-(pentapeptide)GlcNAc (lipid intermediate II). The polypeptide is UDP-N-acetylglucosamine--N-acetylmuramyl-(pentapeptide) pyrophosphoryl-undecaprenol N-acetylglucosamine transferase (Prochlorococcus marinus (strain MIT 9312)).